Reading from the N-terminus, the 96-residue chain is uncharacterized protein (96 aa).

Helical transmembrane passes span 3 to 23, 30 to 50, and 68 to 88; these read KLTI…QLFA, TLGN…LASI, and IGLL…IIII.

The protein resides in the cell membrane. This is an uncharacterized protein from Bacillus subtilis (strain 168).